We begin with the raw amino-acid sequence, 355 residues long: Ornithine transcarbamylase, mitochondrial (355 aa).

The N-terminal 35 residues, 1-35, are a transit peptide targeting the mitochondrion; sequence MLFINLRTLLNNAALRNGHNFVVRNFRCGQPVQDK. Residue Lys71 is modified to N6-acetyllysine; alternate. N6-succinyllysine; alternate is present on Lys71. Lys81 is subject to N6-succinyllysine. Lys89 bears the N6-acetyllysine; alternate mark. Lys89 bears the N6-succinyllysine; alternate mark. 91 to 95 contacts carbamoyl phosphate; sequence STRTR. Phosphoserine is present on Ser134. Arg142 serves as a coordination point for carbamoyl phosphate. Residue Arg142 coordinates L-ornithine. Lys145 is subject to N6-acetyllysine; alternate. At Lys145 the chain carries N6-succinyllysine; alternate. Residue His169 coordinates carbamoyl phosphate. Asn200 serves as a coordination point for L-ornithine. An N6-acetyllysine; alternate mark is found at Lys222, Lys232, and Lys239. Residues Lys222, Lys232, and Lys239 each carry the N6-succinyllysine; alternate modification. N6-acetyllysine is present on Lys244. 264–268 lines the L-ornithine pocket; that stretch reads DTWIS. 2 positions are modified to N6-succinyllysine: Lys275 and Lys290. Lys293 is modified (N6-acetyllysine; alternate). The residue at position 293 (Lys293) is an N6-succinyllysine; alternate. 303 to 306 lines the L-ornithine pocket; sequence HCLP. Cys304 is an active-site residue. Lys308 carries the N6-acetyllysine; alternate modification. Lys308 bears the N6-succinyllysine; alternate mark. Residue Arg331 participates in carbamoyl phosphate binding. Arg331 is an L-ornithine binding site.

The protein belongs to the aspartate/ornithine carbamoyltransferase superfamily. OTCase family. In terms of assembly, homotrimer. Post-translationally, acetylation at Lys-89 negatively regulates ornithine carbamoyltransferase activity in response to nutrient signals.

It localises to the mitochondrion matrix. The catalysed reaction is carbamoyl phosphate + L-ornithine = L-citrulline + phosphate + H(+). It functions in the pathway nitrogen metabolism; urea cycle; L-citrulline from L-ornithine and carbamoyl phosphate: step 1/1. Its activity is regulated as follows. Negatively regulated by lysine acetylation. Functionally, catalyzes the second step of the urea cycle, the condensation of carbamoyl phosphate with L-ornithine to form L-citrulline. The urea cycle ensures the detoxification of ammonia by converting it to urea for excretion. In Ovis aries (Sheep), this protein is Ornithine transcarbamylase, mitochondrial.